Here is a 390-residue protein sequence, read N- to C-terminus: Sulfate adenylyltransferase (390 aa).

Belongs to the sulfate adenylyltransferase family.

The enzyme catalyses sulfate + ATP + H(+) = adenosine 5'-phosphosulfate + diphosphate. Its pathway is sulfur metabolism; hydrogen sulfide biosynthesis; sulfite from sulfate: step 1/3. The sequence is that of Sulfate adenylyltransferase (sat) from Synechocystis sp. (strain ATCC 27184 / PCC 6803 / Kazusa).